Reading from the N-terminus, the 437-residue chain is MAAPVVAIVGRPNVGKSTIFNRMAGERIAIVEDKPGVTRDRLYAPAEWLNYEFRMIDTGGIELGDEPFLAEIRAQVELAIDEADVIVMVASGREGVTAADEVVAKMLYKTDKPVILAVNKVDNPEMRQDIYDFYSLGLGDLFPVSGSHGLGLGDLLDAVVKHFPDEAAEQEDDGAIRFSIIGRPNVGKSSIVNAMLGEDRVIVSDIEGTTRDAIDSRFVTAEGDEFIMVDTAGMRKRGKVYENTEKYSVMRALKAIDNSNVILMVLDAEAGIREQDKHVAGFAHDAGRAMIIIVNKWDAIEKDGHTMKEFENLIRSEFKFLDYAPIMFVSAKTGQRLDRIPQLVKDVDDNHRKRISSSTLNDVIMDAIAVNPTPTDNGRRLRVYYATQVAIQPPTFVIFVNDVELMHFSYERFLENKIREAFDFTGTPIKLIVRARK.

EngA-type G domains lie at 4–167 (PVVA…PDEA) and 176–352 (IRFS…DNHR). Residues 10–17 (GRPNVGKS), 57–61 (DTGGI), 119–122 (NKVD), 182–189 (GRPNVGKS), 230–234 (DTAGM), and 295–298 (NKWD) contribute to the GTP site. In terms of domain architecture, KH-like spans 353–437 (KRISSSTLND…PIKLIVRARK (85 aa)).

This sequence belongs to the TRAFAC class TrmE-Era-EngA-EngB-Septin-like GTPase superfamily. EngA (Der) GTPase family. In terms of assembly, associates with the 50S ribosomal subunit.

Its function is as follows. GTPase that plays an essential role in the late steps of ribosome biogenesis. In Leuconostoc citreum (strain KM20), this protein is GTPase Der.